Here is a 202-residue protein sequence, read N- to C-terminus: Transmembrane 4 L6 family member 1 (202 aa).

The Cytoplasmic segment spans residues 1-9; the sequence is MCYGKCARC. A helical membrane pass occupies residues 10–30; sequence IGHSLVGLALLCIAANILLYF. The Extracellular segment spans residues 31-49; that stretch reads PNGETKYASENHLSRFVWF. The chain crosses the membrane as a helical span at residues 50-70; it reads FSGIVGGGLLMLLPAFVFIGL. Topologically, residues 71-93 are cytoplasmic; the sequence is EQDDCCGCCGHENCGKRCAMLSS. The helical transmembrane segment at 94 to 114 threads the bilayer; it reads VLAALIGIAGSGYCVIVAALG. The Extracellular portion of the chain corresponds to 115–161; sequence LAEGPLCLDSLGQWNYTFASTEGQYLLDTSTWSECTEPKHIVEWNVS. Asn129 and Asn159 each carry an N-linked (GlcNAc...) asparagine glycan. A helical transmembrane segment spans residues 162–182; it reads LFSILLALGGIEFILCLIQVI. At 183–202 the chain is on the cytoplasmic side; it reads NGVLGGICGFCCSHQQQYDC.

Belongs to the L6 tetraspanin family. Present in high molecular weight complexes in tumor cells. Interacts with SDCBP2. Highly expressed in lung, breast, colon and ovarian carcinomas. It is also present on some normal cells, endothelial cells in particular.

Its subcellular location is the membrane. In Homo sapiens (Human), this protein is Transmembrane 4 L6 family member 1 (TM4SF1).